The chain runs to 1353 residues: MFLILLISLPTAFAVIGDLKCTSDNINDKDTGPPPISTDTVDVTNGLGTYYVLDRVYLNTTLFLNGYYPTSGSTYRNMALKGSVLLSRLWFKPPFLSDFINGIFAKVKNTKVIKDRVMYSEFPAITIGSTFVNTSYSVVVQPRTINSTQDGDNKLQGLLEVSVCQYNMCEYPQTICHPNLGNHRKELWHLDTGVVSCLYKRNFTYDVNADYLYFHFYQEGGTFYAYFTDTGVVTKFLFNVYLGMALSHYYVMPLTCNSKLTLEYWVTPLTSRQYLLAFNQDGIIFNAEDCMSDFMSEIKCKTQSIAPPTGVYELNGYTVQPIADVYRRKPNLPNCNIEAWLNDKSVPSPLNWERKTFSNCNFNMSSLMSFIQADSFTCNNIDAAKIYGMCFSSITIDKFAIPNGRKVDLQLGNLGYLQSFNYRIDTTATSCQLYYNLPAANVSVSRFNPSTWNKRFGFIEDSVFKPRPAGVLTNHDVVYAQHCFKAPKNFCPCKLNGSCVGSGPGKNNGIGTCPAGTNYLTCDNLCTPDPITFTGTYKCPQTKSLVGIGEHCSGLAVKSDYCGGNSCTCRPQAFLGWSADSCLQGDKCNIFANFILHDVNSGLTCSTDLQKANTDIILGVCVNYDLYGILGQGIFVEVNATYYNSWQNLLYDSNGNLYGFRDYIINRTFMIRSCYSGRVSAAFHANSSEPALLFRNIKCNYVFNNSLTRQLQPINYFDSYLGCVVNAYNSTAISVQTCDLTVGSGYCVDYSKNRRSRGAITTGYRFTNFEPFTVNSVNDSLEPVGGLYEIQIPSEFTIGNMVEFIQTSSPKVTIDCAAFVCGDYAACKSQLVEYGSFCDNINAILTEVNELLDTTQLQVANSLMNGVTLSTKLKDGVNFNVDDINFSPVLGCLGSECSKASSRSAIEDLLFDKVKLSDVGFVEAYNNCTGGAEIRDLICVQSYKGIKVLPPLLSENQISGYTLAATSASLFPPWTAAAGVPFYLNVQYRINGLGVTMDVLSQNQKLIANAFNNALYAIQEGFDATNSALVKIQAVVNANAEALNNLLQQLSNRFGAISASLQEILSRLDALEAEAQIDRLINGRLTALNAYVSQQLSDSTLVKFSAAQAMEKVNECVKSQSSRINFCGNGNHIISLVQNAPYGLYFIHFSYVPTKYVTARVSPGLCIAGDRGIAPKSGYFVNVNNTWMYTGSGYYYPEPITENNVVVMSTCAVNYTKAPYVMLNTSIPNLPDFKEELDQWFKNQTSVAPDLSLDYINVTFLDLQVEMNRLQEAIKVLNQSYINLKDIGTYEYYVKWPWYVWLLICLAGVAMLVLLFFICCCTGCGTSCFKKCGGCCDDYTGYQELVIKTSHDD.

The N-terminal stretch at 1–13 is a signal peptide; it reads MFLILLISLPTAF. At 14 to 1297 the chain is on the extracellular side; the sequence is AVIGDLKCTS…GTYEYYVKWP (1284 aa). A BetaCoV S1-NTD domain is found at 15–302; it reads VIGDLKCTSD…DFMSEIKCKT (288 aa). 5 disulfides stabilise this stretch: Cys21/Cys169, Cys164/Cys197, Cys176/Cys256, Cys290/Cys300, and Cys335/Cys360. N-linked (GlcNAc...) asparagine; by host glycosylation is found at Asn59, Asn133, and Asn146. N-linked (GlcNAc...) asparagine; by host glycosylation occurs at Asn202. A BetaCoV S1-CTD domain is found at 333–607; sequence PNCNIEAWLN…DVNSGLTCST (275 aa). N-linked (GlcNAc...) asparagine; by host glycosylation occurs at Asn363. Disulfide bonds link Cys378–Cys431 and Cys390–Cys605. Asn441, Asn496, Asn639, Asn666, Asn686, Asn704, Asn729, and Asn778 each carry an N-linked (GlcNAc...) asparagine; by host glycan. Fusion peptide stretches follow at residues 904–925 and 923–943; these read SAIE…VEAY and EAYN…VQSY. Asn927 carries an N-linked (GlcNAc...) asparagine; by host glycan. Cys928 and Cys939 are joined by a disulfide. Residues 1004 to 1054 are heptad repeat 1; that stretch reads QKLIANAFNNALYAIQEGFDATNSALVKIQAVVNANAEALNNLLQQLSNRF. The stretch at 1033 to 1077 forms a coiled coil; the sequence is QAVVNANAEALNNLLQQLSNRFGAISASLQEILSRLDALEAEAQI. N-linked (GlcNAc...) asparagine; by host glycans are attached at residues Asn1184, Asn1214, Asn1224, Asn1243, Asn1257, and Asn1278. Residues 1248 to 1286 form a heptad repeat 2 region; the sequence is APDLSLDYINVTFLDLQVEMNRLQEAIKVLNQSYINLKD. Residues 1259-1287 are a coiled coil; that stretch reads TFLDLQVEMNRLQEAIKVLNQSYINLKDI. A helical membrane pass occupies residues 1298 to 1318; the sequence is WYVWLLICLAGVAMLVLLFFI. Residues 1319 to 1353 are Cytoplasmic-facing; the sequence is CCCTGCGTSCFKKCGGCCDDYTGYQELVIKTSHDD. Positions 1349 to 1353 match the KxHxx motif; sequence TSHDD.

This sequence belongs to the betacoronaviruses spike protein family. Homotrimer; each monomer consists of a S1 and a S2 subunit. The resulting peplomers protrude from the virus surface as spikes. In terms of processing, specific enzymatic cleavages in vivo yield mature proteins. The precursor is processed into S1 and S2 by host cell furin or another cellular protease to yield the mature S1 and S2 proteins. Additionally, a second cleavage leads to the release of a fusion peptide after viral attachment to host cell receptor. The cytoplasmic Cys-rich domain is palmitoylated. Spike glycoprotein is digested within host endosomes.

It localises to the virion membrane. Its subcellular location is the host endoplasmic reticulum-Golgi intermediate compartment membrane. It is found in the host cell membrane. Its function is as follows. S1 attaches the virion to the cell membrane by interacting with sialic acid-containing cell receptors, initiating the infection. Attaches the virion to the cell membrane by interacting with host receptor, initiating the infection. In terms of biological role, mediates fusion of the virion and cellular membranes by acting as a class I viral fusion protein. Under the current model, the protein has at least three conformational states: pre-fusion native state, pre-hairpin intermediate state, and post-fusion hairpin state. During viral and target cell membrane fusion, the coiled coil regions (heptad repeats) assume a trimer-of-hairpins structure, positioning the fusion peptide in close proximity to the C-terminal region of the ectodomain. The formation of this structure appears to drive apposition and subsequent fusion of viral and target cell membranes. Functionally, acts as a viral fusion peptide which is unmasked following S2 cleavage occurring upon virus endocytosis. This Homo sapiens (Human) protein is Spike glycoprotein.